The following is a 692-amino-acid chain: Protein artemis (692 aa).

Residue Thr-380 is modified to Phosphothreonine. Position 385 is a phosphoserine (Ser-385). Disordered stretches follow at residues 504–555 (LENF…DSQS) and 640–664 (STNA…LPKR). Positions 506–520 (NFPSSTVAGGSQSPK) are enriched in polar residues. Residues 530-543 (THISSQNSSQSTHI) are compositionally biased toward low complexity. Polar residues-rich tracts occupy residues 544–555 (TEQGSQGWDSQS) and 640–650 (STNADSQSSSD). Ser-645 bears the Phosphoserine; by ATM mark.

This sequence belongs to the DNA repair metallo-beta-lactamase (DRMBL) family. Interacts with LIG4; the interaction is direct. Interacts with ATM. Interacts with BRCA1. Interacts with PRKDC. Interacts with TP53BP1. Also exhibits ATM- and phosphorylation-dependent interaction with the MRN complex, composed of MRE11, RAD50, and NBN. In terms of processing, phosphorylation on undefined residues by PRKDC may stimulate endonucleolytic activity on 5' and 3' hairpins and overhangs. PRKDC must remain present, even after phosphorylation, for efficient hairpin opening. Also phosphorylated by ATM in response to ionizing radiation (IR) and by ATR in response to ultraviolet (UV) radiation. As to expression, ubiquitously expressed, with highest levels in the kidney, lung, pancreas and placenta (at the mRNA level). Expression is not increased in thymus or bone marrow, sites of V(D)J recombination.

It is found in the nucleus. In terms of biological role, nuclease involved in DNA non-homologous end joining (NHEJ); required for double-strand break repair and V(D)J recombination. Required for V(D)J recombination, the process by which exons encoding the antigen-binding domains of immunoglobulins and T-cell receptor proteins are assembled from individual V, (D), and J gene segments. V(D)J recombination is initiated by the lymphoid specific RAG endonuclease complex, which generates site specific DNA double strand breaks (DSBs). These DSBs present two types of DNA end structures: hairpin sealed coding ends and phosphorylated blunt signal ends. These ends are independently repaired by the non homologous end joining (NHEJ) pathway to form coding and signal joints respectively. This protein exhibits single-strand specific 5'-3' exonuclease activity in isolation and acquires endonucleolytic activity on 5' and 3' hairpins and overhangs when in a complex with PRKDC. The latter activity is required specifically for the resolution of closed hairpins prior to the formation of the coding joint. Also required for the repair of complex DSBs induced by ionizing radiation, which require substantial end-processing prior to religation by NHEJ. This Homo sapiens (Human) protein is Protein artemis.